Reading from the N-terminus, the 140-residue chain is Small ribosomal subunit protein uS12 (140 aa).

Aspartate 102 carries the 3-methylthioaspartic acid modification.

Belongs to the universal ribosomal protein uS12 family. As to quaternary structure, part of the 30S ribosomal subunit. Contacts proteins S8 and S17. May interact with IF1 in the 30S initiation complex.

Functionally, with S4 and S5 plays an important role in translational accuracy. In terms of biological role, interacts with and stabilizes bases of the 16S rRNA that are involved in tRNA selection in the A site and with the mRNA backbone. Located at the interface of the 30S and 50S subunits, it traverses the body of the 30S subunit contacting proteins on the other side and probably holding the rRNA structure together. The combined cluster of proteins S8, S12 and S17 appears to hold together the shoulder and platform of the 30S subunit. This chain is Small ribosomal subunit protein uS12, found in Geobacillus sp. (strain WCH70).